We begin with the raw amino-acid sequence, 1364 residues long: Pleckstrin homology domain-containing family H member 1 (1364 aa).

A coiled-coil region spans residues 28 to 169 (FRLQASKIRE…VGSLQDALEA (142 aa)). Disordered regions lie at residues 184–266 (GAAE…SPPH), 296–321 (GTKT…PGTP), 356–395 (LHPS…ESPK), 487–529 (PFMD…IKRG), and 546–568 (DACS…SSYS). The span at 237-246 (EDSSSSTVHS) shows a compositional bias: polar residues. Basic and acidic residues predominate over residues 364-379 (LESRARSREEPEKMEM). Residues 509–520 (VPSSESRKTSGL) are compositionally biased toward polar residues. PH domains follow at residues 578–672 (SLEK…SLLK) and 687–796 (KPTV…VAAG). A Phosphoserine modification is found at Ser745. Positions 832 to 986 (YSKDGLYASL…PSRMEVVSIL (155 aa)) constitute a MyTH4 domain. Positions 997–1333 (FSIPVHFTNG…NHCTTTVNPP (337 aa)) constitute an FERM domain.

The protein is Pleckstrin homology domain-containing family H member 1 (PLEKHH1) of Homo sapiens (Human).